A 150-amino-acid polypeptide reads, in one-letter code: D-aminoacyl-tRNA deacylase (150 aa).

Residues 138–139 (GP) carry the Gly-cisPro motif, important for rejection of L-amino acids motif.

The protein belongs to the DTD family. As to quaternary structure, homodimer.

It is found in the cytoplasm. It carries out the reaction glycyl-tRNA(Ala) + H2O = tRNA(Ala) + glycine + H(+). The catalysed reaction is a D-aminoacyl-tRNA + H2O = a tRNA + a D-alpha-amino acid + H(+). Its function is as follows. An aminoacyl-tRNA editing enzyme that deacylates mischarged D-aminoacyl-tRNAs. Also deacylates mischarged glycyl-tRNA(Ala), protecting cells against glycine mischarging by AlaRS. Acts via tRNA-based rather than protein-based catalysis; rejects L-amino acids rather than detecting D-amino acids in the active site. By recycling D-aminoacyl-tRNA to D-amino acids and free tRNA molecules, this enzyme counteracts the toxicity associated with the formation of D-aminoacyl-tRNA entities in vivo and helps enforce protein L-homochirality. This chain is D-aminoacyl-tRNA deacylase, found in Chlorobaculum tepidum (strain ATCC 49652 / DSM 12025 / NBRC 103806 / TLS) (Chlorobium tepidum).